We begin with the raw amino-acid sequence, 191 residues long: MKQLFLIIGAPGSGKTTDAELIAKNNSETIAHFSTGDLLRAESAKKTERGLLIEKFTSQGELVPLEIVVETILSAIKSSSKGIILIDGYPRSVEQMQALDKELNAQNEVVLKSVIEVKVSENTAKERVLGRSRGADDNERVFHNRMRVFLDPLAEIQNFYKNKNVYKAINGERSIEEIVNEMQKYILSFAN.

12-17 provides a ligand contact to ATP; sequence GSGKTT. Residues 34 to 63 form an NMP region; the sequence is STGDLLRAESAKKTERGLLIEKFTSQGELV. Residues Thr35, Arg40, 61–63, 88–91, and Gln95 contribute to the AMP site; these read ELV and GYPR. Residues 130 to 136 form an LID region; it reads GRSRGAD. Arg131 is an ATP binding site. Positions 133 and 145 each coordinate AMP. Arg173 is an ATP binding site.

It belongs to the adenylate kinase family. Monomer.

The protein localises to the cytoplasm. The catalysed reaction is AMP + ATP = 2 ADP. It functions in the pathway purine metabolism; AMP biosynthesis via salvage pathway; AMP from ADP: step 1/1. In terms of biological role, catalyzes the reversible transfer of the terminal phosphate group between ATP and AMP. Plays an important role in cellular energy homeostasis and in adenine nucleotide metabolism. The protein is Adenylate kinase of Helicobacter pylori (strain G27).